The chain runs to 118 residues: Cell division protein FtsB (118 aa).

Topologically, residues 1–6 are cytoplasmic; sequence MRNWRW. The helical transmembrane segment at 7–24 threads the bilayer; the sequence is LLLVLAALLSWLQHRFWF. The Periplasmic segment spans residues 25 to 118; sequence GPGNSGEVRM…DLAQPRREKR (94 aa). Residues 30-66 adopt a coiled-coil conformation; sequence GEVRMLQVQIVQQHQENERLRQRNASLAAEVKNLKDG. The tract at residues 97-118 is disordered; it reads PLPNDTSADHGVDLAQPRREKR. Basic and acidic residues predominate over residues 103 to 118; sequence SADHGVDLAQPRREKR.

Belongs to the FtsB family. In terms of assembly, part of a complex composed of FtsB, FtsL and FtsQ.

It is found in the cell inner membrane. In terms of biological role, essential cell division protein. May link together the upstream cell division proteins, which are predominantly cytoplasmic, with the downstream cell division proteins, which are predominantly periplasmic. In Xylella fastidiosa (strain 9a5c), this protein is Cell division protein FtsB.